A 105-amino-acid chain; its full sequence is Replication restart protein PriB (105 aa).

In terms of domain architecture, SSB spans 1–102 (MTANRLTLSG…LHAEQIELID (102 aa)).

It belongs to the PriB family. As to quaternary structure, homodimer. Interacts with PriA and DnaT. Component of the replication restart primosome. Primosome assembly occurs via a 'hand-off' mechanism. PriA binds to replication forks, subsequently PriB then DnaT bind; DnaT then displaces ssDNA to generate the helicase loading substrate.

In terms of biological role, involved in the restart of stalled replication forks, which reloads the replicative helicase on sites other than the origin of replication; the PriA-PriB pathway is the major replication restart pathway. During primosome assembly it facilitates complex formation between PriA and DnaT on DNA; stabilizes PriA on DNA. Stimulates the DNA unwinding activity of PriA helicase. In Erwinia tasmaniensis (strain DSM 17950 / CFBP 7177 / CIP 109463 / NCPPB 4357 / Et1/99), this protein is Replication restart protein PriB.